We begin with the raw amino-acid sequence, 213 residues long: Adenylate kinase (213 aa).

10–15 (GSGKGT) provides a ligand contact to ATP. The segment at 30 to 59 (STGDMLRTTVNKESVLGKNIQAIIKLGNLV) is NMP. AMP contacts are provided by residues threonine 31, arginine 36, 57 to 59 (NLV), 85 to 88 (GFPR), and glutamine 92. Positions 122–159 (GRMVHEPSGRIYHVTFNPPKQKGKDDITGENLIIRQDD) are LID. ATP-binding positions include arginine 123 and 132–133 (IY). AMP-binding residues include arginine 156 and arginine 167. An ATP-binding site is contributed by cysteine 199.

Belongs to the adenylate kinase family. In terms of assembly, monomer.

The protein resides in the cytoplasm. It carries out the reaction AMP + ATP = 2 ADP. It participates in purine metabolism; AMP biosynthesis via salvage pathway; AMP from ADP: step 1/1. Catalyzes the reversible transfer of the terminal phosphate group between ATP and AMP. Plays an important role in cellular energy homeostasis and in adenine nucleotide metabolism. This chain is Adenylate kinase, found in Baumannia cicadellinicola subsp. Homalodisca coagulata.